The chain runs to 487 residues: L-tartrate/succinate antiporter (487 aa).

The next 14 helical transmembrane spans lie at 10–30 (YLAPLAVIAIIALIPVPAGLE), 33–53 (TWLYFAVFTGVIVGLILEPVP), 54–74 (GAVVAMVGISIIAILSPWLLF), 93–113 (WAVSGFSNSVIWLIFAAFMFG), 137–157 (TLFLGYAVMFSELILAPVTPS), 189–209 (IGSYIMWMGIVADCVTSAIFL), 236–256 (FLGMLPLSILLVLLVPWLAYV), 292–312 (LIVGALVLWIFGGDYIDAAMV), 313–333 (GYSVVALMLLLRIISWDDIVS), 340–360 (VFFWLASLITLATGLNNTGFI), 370–390 (SLSGYSPTMVMVALIVVFYLL), 393–413 (FFASATAYTSALAPMMIAAAL), 418–438 (IPLPVFCLMVGAAIGLGSILT), and 465–485 (IFGLIFLVLLVITGLLWMPVV).

Belongs to the SLC13A/DASS transporter (TC 2.A.47) family. DIT1 subfamily.

It is found in the cell inner membrane. It carries out the reaction (2R,3R)-tartrate(out) + succinate(in) = (2R,3R)-tartrate(in) + succinate(out). In terms of biological role, catalyzes the uptake of tartrate in exchange for intracellular succinate. Essential for anaerobic L-tartrate fermentation. The chain is L-tartrate/succinate antiporter (ttdT) from Shigella sonnei (strain Ss046).